The sequence spans 133 residues: Meiotically up-regulated gene 15 protein (133 aa).

It is found in the cytoplasm. The protein localises to the nucleus. Its function is as follows. Has a role in meiosis. This chain is Meiotically up-regulated gene 15 protein (mug15), found in Schizosaccharomyces pombe (strain 972 / ATCC 24843) (Fission yeast).